A 543-amino-acid polypeptide reads, in one-letter code: Chaperonin GroEL (543 aa).

Residues 29–32 (TLGP), 86–90 (DGTTT), G413, 477–479 (DAL), and D493 each bind ATP.

Belongs to the chaperonin (HSP60) family. Forms a cylinder of 14 subunits composed of two heptameric rings stacked back-to-back. Interacts with the co-chaperonin GroES.

Its subcellular location is the cytoplasm. The catalysed reaction is ATP + H2O + a folded polypeptide = ADP + phosphate + an unfolded polypeptide.. In terms of biological role, together with its co-chaperonin GroES, plays an essential role in assisting protein folding. The GroEL-GroES system forms a nano-cage that allows encapsulation of the non-native substrate proteins and provides a physical environment optimized to promote and accelerate protein folding. In Clostridium novyi (strain NT), this protein is Chaperonin GroEL.